A 118-amino-acid polypeptide reads, in one-letter code: Large ribosomal subunit protein bL19 (118 aa).

It belongs to the bacterial ribosomal protein bL19 family.

Functionally, this protein is located at the 30S-50S ribosomal subunit interface and may play a role in the structure and function of the aminoacyl-tRNA binding site. In Coprothermobacter proteolyticus (strain ATCC 35245 / DSM 5265 / OCM 4 / BT), this protein is Large ribosomal subunit protein bL19.